Reading from the N-terminus, the 306-residue chain is Polyphosphate kinase PPK2B (306 aa).

The protein belongs to the polyphosphate kinase 2 (PPK2) family. Class I subfamily. Homotetramer. Mn(2+) serves as cofactor.

It carries out the reaction [phosphate](n) + ATP = [phosphate](n+1) + ADP. It catalyses the reaction [phosphate](n) + GTP = [phosphate](n+1) + GDP. Catalyzes the synthesis of polyP from ATP or GTP. Can also use inorganic polyphosphate (polyP) as a donor to convert ADP to ATP, but the activity is 10-fold higher in vitro for polyP synthesis than for ATP formation. This chain is Polyphosphate kinase PPK2B, found in Corynebacterium glutamicum (strain ATCC 13032 / DSM 20300 / JCM 1318 / BCRC 11384 / CCUG 27702 / LMG 3730 / NBRC 12168 / NCIMB 10025 / NRRL B-2784 / 534).